A 756-amino-acid polypeptide reads, in one-letter code: Sodium/hydrogen exchanger 8 (756 aa).

The Extracellular portion of the chain corresponds to 1-31 (MTSIIGAALPYKSPEKAIASSSYSAENDSSP). N-linked (GlcNAc...) asparagine glycosylation occurs at Asn27. A helical membrane pass occupies residues 32–52 (VDAVIFAGTSLVLGTACRYLF). Topologically, residues 53–56 (NGTR) are cytoplasmic. The chain crosses the membrane as a helical span at residues 57–77 (VPYTVVLLVIGIFLGSLEYGT). At 78–89 (KHNLGKLGHGIR) the chain is on the extracellular side. Residues 90–110 (IWNGINPDLLLAVFLPVLLFE) form a helical membrane-spanning segment. Over 111–125 (SSFSMDVHQIKRCMG) the chain is Cytoplasmic. The helical transmembrane segment at 126-146 (QMVLLAGPGVLISTFCLGALI) threads the bilayer. Over 147–157 (KLTFPYNWDWK) the chain is Extracellular. Residues 158-178 (TSLLLGGLLGATDPVAVVALL) form a helical membrane-spanning segment. The Cytoplasmic portion of the chain corresponds to 179-194 (KELGASKKMTTLIDGE). Residues 195–215 (SLMNDGVSVVVFQLFFKMVMG) form a helical membrane-spanning segment. Over 216–225 (HNSDWGSIIK) the chain is Extracellular. The chain crosses the membrane as a helical span at residues 226–248 (FLVQNSFGAVGIGLAFGIASVFW). Residues 249–251 (LKF) lie on the Cytoplasmic side of the membrane. Residues 252 to 271 (IFNDTVAQITVTLSASYFAY) traverse the membrane as a helical segment. Residues 272–276 (YTAQE) are Extracellular-facing. The chain crosses the membrane as a helical span at residues 277–297 (WAGVSGILTVMILGMFFAAFA). Residues 298–311 (RTAFKGDSHQSLHH) lie on the Cytoplasmic side of the membrane. A helical transmembrane segment spans residues 312–332 (FWEMAAYIANTLVFMLSGVII). Topologically, residues 333–350 (AESVLSGQTISYKGNSWS) are extracellular. The chain crosses the membrane as a helical span at residues 351-371 (FLFLLYLYVQLSRCVVVGVLY). Over 372-385 (PLLCRSGYGLDWKE) the chain is Cytoplasmic. A helical transmembrane segment spans residues 386–406 (SIILTWSGLRGAVSLSLALSV). The Extracellular portion of the chain corresponds to 407 to 422 (KQSSGNSYLSSDTGTR). The helical transmembrane segment at 423–443 (FLFLTGGIVFLTLVVNGSTTQ) threads the bilayer. Over 444 to 756 (LLLHLLRMDT…RSLAIGETDA (313 aa)) the chain is Cytoplasmic.

Belongs to the monovalent cation:proton antiporter 1 (CPA1) transporter (TC 2.A.36) family.

Its subcellular location is the cell membrane. The enzyme catalyses Na(+)(in) + H(+)(out) = Na(+)(out) + H(+)(in). It catalyses the reaction K(+)(in) + H(+)(out) = K(+)(out) + H(+)(in). Its function is as follows. May act in low affinity electroneutral exchange of protons for cations such as Na(+) or K(+) across membranes. May also exchange Li(+) and Cs(+) with a lower affinity. This Arabidopsis thaliana (Mouse-ear cress) protein is Sodium/hydrogen exchanger 8 (NHX8).